The chain runs to 61 residues: DNA-binding protein 7a (61 aa).

Residues 37-61 form a disordered region; that stretch reads NGKTGRGAVSEKDAPKELLEKLEKK. Residues 45 to 61 are compositionally biased toward basic and acidic residues; that stretch reads VSEKDAPKELLEKLEKK.

It belongs to the 7 kDa DNA-binding/endoribonuclease P2 family. In terms of assembly, monomer.

It localises to the cytoplasm. Functionally, can constrain negative DNA supercoils. May be involved in maintaining the integrity of the genome at high temperature. This Acidianus hospitalis (strain W1) protein is DNA-binding protein 7a.